Reading from the N-terminus, the 557-residue chain is Copine-6 (557 aa).

2 C2 domains span residues 2 to 127 and 134 to 263; these read SDPE…TKPL and TAGK…MQWD. Residues aspartate 167, aspartate 173, aspartate 229, aspartate 231, and aspartate 237 each coordinate Ca(2+). The linker region stretch occupies residues 244–303; that stretch reads STFQEMQEGTANPGQEMQWDCINPKYRDKKKNYKSSGTVVLAQCTVEKVHTFLDYIMGGC. Positions 306–526 constitute a VWFA domain; that stretch reads SFTVAIDFTA…ALAKCVLAEV (221 aa).

This sequence belongs to the copine family. Interacts (via second C2 domain) with OS9 (via C-terminus); this interaction occurs in a calcium-dependent manner in vitro. May interact with NECAB1. Requires Ca(2+) as cofactor. As to expression, widely expressed in the brain. Expressed weakly in the kidney, liver and fetal heart. Expressed in melanocytes.

The protein resides in the cytoplasm. It is found in the cell membrane. Its subcellular location is the endosome. It localises to the cytoplasmic vesicle. The protein localises to the clathrin-coated vesicle. The protein resides in the perikaryon. It is found in the cell projection. Its subcellular location is the dendrite. Calcium-dependent phospholipid-binding protein that plays a role in calcium-mediated intracellular processes. Binds phospholipid membranes in a calcium-dependent manner. Plays a role in dendrite formation by melanocytes. The chain is Copine-6 from Homo sapiens (Human).